The following is a 130-amino-acid chain: Large ribosomal subunit protein bL19 (130 aa).

This sequence belongs to the bacterial ribosomal protein bL19 family.

This protein is located at the 30S-50S ribosomal subunit interface and may play a role in the structure and function of the aminoacyl-tRNA binding site. The protein is Large ribosomal subunit protein bL19 of Gluconobacter oxydans (strain 621H) (Gluconobacter suboxydans).